The sequence spans 85 residues: Phosphocarrier protein HPr (85 aa).

Residues M1 to E85 form the HPr domain. Catalysis depends on H15, which acts as the Pros-phosphohistidine intermediate.

The protein localises to the cytoplasm. Functionally, general (non sugar-specific) component of the phosphoenolpyruvate-dependent sugar phosphotransferase system (sugar PTS). This major carbohydrate active-transport system catalyzes the phosphorylation of incoming sugar substrates concomitantly with their translocation across the cell membrane. The phosphoryl group from phosphoenolpyruvate (PEP) is transferred to the phosphoryl carrier protein HPr by enzyme I. Phospho-HPr then transfers it to the PTS EIIA domain. The sequence is that of Phosphocarrier protein HPr (ptsH) from Klebsiella pneumoniae.